The chain runs to 313 residues: Tagatose-6-phosphate kinase (313 aa).

Belongs to the carbohydrate kinase PfkB family. LacC subfamily.

It catalyses the reaction D-tagatofuranose 6-phosphate + ATP = D-tagatofuranose 1,6-bisphosphate + ADP + H(+). It functions in the pathway carbohydrate metabolism; D-tagatose 6-phosphate degradation; D-glyceraldehyde 3-phosphate and glycerone phosphate from D-tagatose 6-phosphate: step 1/2. This is Tagatose-6-phosphate kinase from Enterococcus faecalis (strain ATCC 700802 / V583).